Reading from the N-terminus, the 298-residue chain is Lipoyl synthase (298 aa).

[4Fe-4S] cluster contacts are provided by Cys-40, Cys-45, Cys-51, Cys-67, Cys-71, Cys-74, and Ser-280. Positions 53–269 constitute a Radical SAM core domain; it reads AVRRTATFMI…KEIALSKGFS (217 aa).

This sequence belongs to the radical SAM superfamily. Lipoyl synthase family. It depends on [4Fe-4S] cluster as a cofactor.

The protein resides in the cytoplasm. The catalysed reaction is [[Fe-S] cluster scaffold protein carrying a second [4Fe-4S](2+) cluster] + N(6)-octanoyl-L-lysyl-[protein] + 2 oxidized [2Fe-2S]-[ferredoxin] + 2 S-adenosyl-L-methionine + 4 H(+) = [[Fe-S] cluster scaffold protein] + N(6)-[(R)-dihydrolipoyl]-L-lysyl-[protein] + 4 Fe(3+) + 2 hydrogen sulfide + 2 5'-deoxyadenosine + 2 L-methionine + 2 reduced [2Fe-2S]-[ferredoxin]. It functions in the pathway protein modification; protein lipoylation via endogenous pathway; protein N(6)-(lipoyl)lysine from octanoyl-[acyl-carrier-protein]. Functionally, catalyzes the radical-mediated insertion of two sulfur atoms into the C-6 and C-8 positions of the octanoyl moiety bound to the lipoyl domains of lipoate-dependent enzymes, thereby converting the octanoylated domains into lipoylated derivatives. This chain is Lipoyl synthase, found in Geobacillus thermodenitrificans (strain NG80-2).